Here is a 135-residue protein sequence, read N- to C-terminus: Antennal-specific protein OS-C (135 aa).

The N-terminal stretch at 1–27 (MGFHMGRQLLLSGFLLVMLQMVTQTQA) is a signal peptide. Residues 43–84 (VIKREGDDDGDDDDSSSEETVEDSEESRRRRREVNTDNTPSA) are disordered. A compositionally biased stretch (acidic residues) spans 49 to 67 (DDDGDDDDSSSEETVEDSE).

In terms of tissue distribution, antenna. In the third antennal segment. Expressed in sencilla coeloconica.

This is Antennal-specific protein OS-C (Os-C) from Drosophila melanogaster (Fruit fly).